A 123-amino-acid polypeptide reads, in one-letter code: Large ribosomal subunit protein bL12 (123 aa).

Belongs to the bacterial ribosomal protein bL12 family. As to quaternary structure, homodimer. Part of the ribosomal stalk of the 50S ribosomal subunit. Forms a multimeric L10(L12)X complex, where L10 forms an elongated spine to which 2 to 4 L12 dimers bind in a sequential fashion. Binds GTP-bound translation factors.

Forms part of the ribosomal stalk which helps the ribosome interact with GTP-bound translation factors. Is thus essential for accurate translation. The sequence is that of Large ribosomal subunit protein bL12 from Rickettsia bellii (strain OSU 85-389).